Reading from the N-terminus, the 407-residue chain is Imidazolonepropionase (407 aa).

2 residues coordinate Fe(3+): histidine 74 and histidine 76. 2 residues coordinate Zn(2+): histidine 74 and histidine 76. 4-imidazolone-5-propanoate-binding residues include arginine 83, tyrosine 146, and histidine 179. An N-formimidoyl-L-glutamate-binding site is contributed by tyrosine 146. Fe(3+) is bound at residue histidine 244. Histidine 244 contributes to the Zn(2+) binding site. Glutamine 247 provides a ligand contact to 4-imidazolone-5-propanoate. Aspartate 319 serves as a coordination point for Fe(3+). Residue aspartate 319 coordinates Zn(2+). 2 residues coordinate N-formimidoyl-L-glutamate: asparagine 321 and glycine 323. Threonine 324 serves as a coordination point for 4-imidazolone-5-propanoate.

Belongs to the metallo-dependent hydrolases superfamily. HutI family. The cofactor is Zn(2+). Requires Fe(3+) as cofactor.

The protein localises to the cytoplasm. The enzyme catalyses 4-imidazolone-5-propanoate + H2O = N-formimidoyl-L-glutamate. It participates in amino-acid degradation; L-histidine degradation into L-glutamate; N-formimidoyl-L-glutamate from L-histidine: step 3/3. Its function is as follows. Catalyzes the hydrolytic cleavage of the carbon-nitrogen bond in imidazolone-5-propanoate to yield N-formimidoyl-L-glutamate. It is the third step in the universal histidine degradation pathway. In Salmonella enteritidis PT4 (strain P125109), this protein is Imidazolonepropionase.